The following is a 457-amino-acid chain: Multidrug resistance protein MdtK (457 aa).

12 helical membrane passes run 11–31 (LSALAVPVIIAQVSQTSMGVV), 53–73 (IWLPAILFGHGLLLALTPVVA), 93–113 (FLAAIISVLTMLVLYQGEYAI), 127–147 (AIGYLHALLWGVPGYLFYQVL), 159–179 (PGMMIGFIGLLINIPINYIFI), 190–210 (GVGCGVATASVYWIMMLLMML), 249–269 (LLFEVTLFAVVALLVLPLGVV), 276–296 (IALNFSSLMFVLPLSVGVATT), 313–333 (IAAHTGIMAGVALACCTAIFT), 357–377 (LMLLAAVYQISDAVQVIGTGV), 387–407 (IFYITFVAYWVLGLPSGYLLA), and 417–437 (GPAGFWCGFIIGLTAAAVMMV).

The protein belongs to the multi antimicrobial extrusion (MATE) (TC 2.A.66.1) family. MdtK subfamily.

The protein resides in the cell inner membrane. In terms of biological role, multidrug efflux pump that functions probably as a Na(+)/drug antiporter. The sequence is that of Multidrug resistance protein MdtK from Pectobacterium atrosepticum (strain SCRI 1043 / ATCC BAA-672) (Erwinia carotovora subsp. atroseptica).